We begin with the raw amino-acid sequence, 970 residues long: Insulin-degrading enzyme-like 1, peroxisomal (970 aa).

Position 69 (His69) interacts with Zn(2+). The active-site Proton acceptor is Glu72. Zn(2+) is bound at residue His73. Glu143 is an active-site residue. Glu150 is a Zn(2+) binding site.

The protein belongs to the peptidase M16 family. Zn(2+) serves as cofactor.

Its subcellular location is the peroxisome. In terms of biological role, peptidase that might be involved in pathogen or wound response. Not required for peroxisome biogenesis, indole-3-butyric acid (IBA) metabolism, fatty acid beta-oxidation or degradation of glyoxylate cycle enzymes during seedling development. This Arabidopsis thaliana (Mouse-ear cress) protein is Insulin-degrading enzyme-like 1, peroxisomal (PXM16).